The chain runs to 138 residues: Invertebrate-type lysozyme 6 (138 aa).

The first 18 residues, 1–18, serve as a signal peptide directing secretion; it reads MFVKLCGILAFAVTYASS. The region spanning 19-138 is the I-type lysozyme domain; that stretch reads DCLQCICKKE…WNGIKGLGCS (120 aa). Disulfide bonds link Cys-20–Cys-106, Cys-25–Cys-31, Cys-36–Cys-45, Cys-58–Cys-86, Cys-76–Cys-82, and Cys-98–Cys-120. Glu-28 functions as the Proton donor in the catalytic mechanism. Asp-39 acts as the Nucleophile in catalysis. 51 to 57 serves as a coordination point for substrate; it reads KLSYYKD. Residues Tyr-90 and 113 to 115 each bind substrate; that span reads HNG.

The protein belongs to the glycosyl hydrolase 22 family. Type-I lysozyme subfamily. In terms of tissue distribution, expressed in pharyngeal gland cells and duct projections, coelomocytes and intestine.

It catalyses the reaction Hydrolysis of (1-&gt;4)-beta-linkages between N-acetylmuramic acid and N-acetyl-D-glucosamine residues in a peptidoglycan and between N-acetyl-D-glucosamine residues in chitodextrins.. Functionally, has bacteriolytic activity against Gram-positive bacteria. The chain is Invertebrate-type lysozyme 6 from Caenorhabditis elegans.